Here is a 559-residue protein sequence, read N- to C-terminus: Tectonic-like complex member MKS1 (559 aa).

The C2 B9-type domain maps to 311–439 (LRLFVNGEVV…TVSTWRPVEL (129 aa)).

As to quaternary structure, part of the tectonic-like complex (also named B9 complex). Interacts with TMEM107. Interacts with TCTN3, AHI1, TCTN1, TCTN2, CC2D2A. Interacts with FLNA. Interacts with TMEM67. Interacts with B9D1 and B9D2.

It localises to the cytoplasm. The protein resides in the cytoskeleton. The protein localises to the cilium basal body. It is found in the microtubule organizing center. Its subcellular location is the centrosome. In terms of biological role, component of the tectonic-like complex, a complex localized at the transition zone of primary cilia and acting as a barrier that prevents diffusion of transmembrane proteins between the cilia and plasma membranes. Involved in centrosome migration to the apical cell surface during early ciliogenesis. Required for ciliary structure and function, including a role in regulating length and appropriate number through modulating centrosome duplication. Required for cell branching morphology. The polypeptide is Tectonic-like complex member MKS1 (MKS1) (Homo sapiens (Human)).